The following is a 94-amino-acid chain: DNA-directed RNA polymerase subunit omega (94 aa).

This sequence belongs to the RNA polymerase subunit omega family. In terms of assembly, the RNAP catalytic core consists of 2 alpha, 1 beta, 1 beta' and 1 omega subunit. When a sigma factor is associated with the core the holoenzyme is formed, which can initiate transcription.

The enzyme catalyses RNA(n) + a ribonucleoside 5'-triphosphate = RNA(n+1) + diphosphate. Functionally, promotes RNA polymerase assembly. Latches the N- and C-terminal regions of the beta' subunit thereby facilitating its interaction with the beta and alpha subunits. The sequence is that of DNA-directed RNA polymerase subunit omega from Frankia casuarinae (strain DSM 45818 / CECT 9043 / HFP020203 / CcI3).